The chain runs to 343 residues: Protein RecA (343 aa).

Residue 64–71 coordinates ATP; it reads GPESSGKT.

Belongs to the RecA family.

It localises to the cytoplasm. Can catalyze the hydrolysis of ATP in the presence of single-stranded DNA, the ATP-dependent uptake of single-stranded DNA by duplex DNA, and the ATP-dependent hybridization of homologous single-stranded DNAs. It interacts with LexA causing its activation and leading to its autocatalytic cleavage. The protein is Protein RecA of Acidiphilium cryptum (strain JF-5).